The primary structure comprises 500 residues: Glutelin type-B 4 (500 aa).

The N-terminal stretch at 1–24 (MATIAFSRLSIYFCVLLLCHGSMA) is a signal peptide. Cystine bridges form between Cys45–Cys78 and Cys121–Cys310. 2 Cupin type-1 domains span residues 50–245 (LQAF…LVAK) and 316–465 (LNIE…EQAR). Over residues 481-493 (RYQQQTYPGFSNE) the composition is skewed to polar residues. The segment at 481 to 500 (RYQQQTYPGFSNESENEALE) is disordered.

This sequence belongs to the 11S seed storage protein (globulins) family. In terms of assembly, hexamer; each subunit is composed of an acidic and a basic chain derived from a single precursor and linked by a disulfide bond. Expressed in endosperm (at protein level).

In terms of biological role, seed storage protein. This is Glutelin type-B 4 (GLUB4) from Oryza sativa subsp. japonica (Rice).